Here is a 645-residue protein sequence, read N- to C-terminus: Translation factor GUF1, mitochondrial (645 aa).

The 185-residue stretch at 44-228 folds into the tr-type G domain; the sequence is ENYRNFSIVA…AIIDRIPPPT (185 aa). GTP contacts are provided by residues 53–60, 120–124, and 174–177; these read AHVDHGKS, DTPGH, and NKID.

Belongs to the TRAFAC class translation factor GTPase superfamily. Classic translation factor GTPase family. LepA subfamily.

The protein resides in the mitochondrion inner membrane. The catalysed reaction is GTP + H2O = GDP + phosphate + H(+). Its function is as follows. Promotes mitochondrial protein synthesis. May act as a fidelity factor of the translation reaction, by catalyzing a one-codon backward translocation of tRNAs on improperly translocated ribosomes. Binds to mitochondrial ribosomes in a GTP-dependent manner. This chain is Translation factor GUF1, mitochondrial, found in Saccharomyces cerevisiae (strain ATCC 204508 / S288c) (Baker's yeast).